Reading from the N-terminus, the 230-residue chain is MAKADLDKDPFDVASMFDDVGKNYDLTNTVLSFGQDRVWRKRTRQRLDLKPGEKVLDLAAGTAVSTVELAKSGAFCVACDFSQGMLAAGKDRDVSKVVGDGMQLPFADNSFDAVTISYGLRNIHDFRAGLKEMARVTKPGGRLTVAEFSTPVIPVFGTVYKEYLMRLLPQAARAVSSNPEAYIYLADSIRAWPSQAELAREINQNGWSDCGWQNLTFGIVALHSAIKPEN.

S-adenosyl-L-methionine contacts are provided by residues Thr-62, Asp-80, 100-101 (DG), and Ser-117.

Belongs to the class I-like SAM-binding methyltransferase superfamily. MenG/UbiE family.

The enzyme catalyses a 2-demethylmenaquinol + S-adenosyl-L-methionine = a menaquinol + S-adenosyl-L-homocysteine + H(+). The protein operates within quinol/quinone metabolism; menaquinone biosynthesis; menaquinol from 1,4-dihydroxy-2-naphthoate: step 2/2. In terms of biological role, methyltransferase required for the conversion of demethylmenaquinol (DMKH2) to menaquinol (MKH2). This is Demethylmenaquinone methyltransferase from Corynebacterium glutamicum (strain ATCC 13032 / DSM 20300 / JCM 1318 / BCRC 11384 / CCUG 27702 / LMG 3730 / NBRC 12168 / NCIMB 10025 / NRRL B-2784 / 534).